Consider the following 242-residue polypeptide: Large ribosomal subunit protein uL1 (242 aa).

Belongs to the universal ribosomal protein uL1 family. Part of the 50S ribosomal subunit.

Functionally, binds directly to 23S rRNA. The L1 stalk is quite mobile in the ribosome, and is involved in E site tRNA release. Protein L1 is also a translational repressor protein, it controls the translation of the L11 operon by binding to its mRNA. The sequence is that of Large ribosomal subunit protein uL1 from Streptomyces sp. (strain FRI-5).